We begin with the raw amino-acid sequence, 280 residues long: MQNKQNQFELEKGIHTDFQEEMSYAGYLQLDKILSSQQRLSNHHDEMLFIIIHQTSELWMKLILHEMEAAIQCILDDDLEPSFKMFARISRIQQQLIQSWSVLSTLTPSEYMEFRECLGHASGFQSYQNRLIEFALGQKNAHVLPVFQHDPEIYEKMTRALHSPSVYDAAIKALAVRGLPIDEDVLHRDYSQTYQPNASVEEAWLTVYRNVDRYWDLYELAEKLVDIGSQQQTWRYMHMNTVERIIGYKKGTGGSSGVSYLKKSLDRSFFPELWTLRTKL.

Residues 49–53 (FIIIH), Tyr-111, and Arg-115 contribute to the substrate site. A heme-binding site is contributed by His-238. Thr-252 contributes to the substrate binding site.

This sequence belongs to the tryptophan 2,3-dioxygenase family. In terms of assembly, homotetramer. Heme serves as cofactor.

The enzyme catalyses L-tryptophan + O2 = N-formyl-L-kynurenine. Its pathway is amino-acid degradation; L-tryptophan degradation via kynurenine pathway; L-kynurenine from L-tryptophan: step 1/2. Its function is as follows. Heme-dependent dioxygenase that catalyzes the oxidative cleavage of the L-tryptophan (L-Trp) pyrrole ring and converts L-tryptophan to N-formyl-L-kynurenine. Catalyzes the oxidative cleavage of the indole moiety. The chain is Tryptophan 2,3-dioxygenase from Geobacillus thermodenitrificans (strain NG80-2).